A 66-amino-acid polypeptide reads, in one-letter code: Large ribosomal subunit protein bL35 (66 aa).

The protein belongs to the bacterial ribosomal protein bL35 family.

The chain is Large ribosomal subunit protein bL35 from Lysinibacillus sphaericus (strain C3-41).